Here is a 410-residue protein sequence, read N- to C-terminus: 45 kDa immediate-early protein 2 (410 aa).

The interval S36–E166 is disordered. 3 stretches are compositionally biased toward low complexity: residues R47 to T67, S90 to D101, and A132 to G147. A zinc finger lies at V257–H283.

Functionally, activates the E1.7 promoter. This activation is augmented by the IE1 protein. It down-regulates the transcription of genes under the control of the major IE promoter. This is 45 kDa immediate-early protein 2 (UL122) from Homo sapiens (Human).